The primary structure comprises 66 residues: Potassium channel toxin alpha-KTx 27.3 (66 aa).

Residues 1–17 (MKLMWLLFLCVLAFSIA) form the signal peptide.

The protein belongs to the short scorpion toxin superfamily. Potassium channel inhibitor family. Alpha-KTx 27 subfamily. Contains 4 disulfide bonds. Expressed by the venom gland.

It is found in the secreted. In Lychas mucronatus (Chinese swimming scorpion), this protein is Potassium channel toxin alpha-KTx 27.3.